Reading from the N-terminus, the 244-residue chain is Putative lipoprotein LprA (244 aa).

A signal peptide spans 1–24 (MKHPPCSVVAAATAILAVVLAIGG). Cys25 carries the N-palmitoyl cysteine lipid modification. Residue Cys25 is the site of S-diacylglycerol cysteine attachment.

Belongs to the LppX/LprAFG lipoprotein family.

The protein localises to the cell membrane. The chain is Putative lipoprotein LprA (lprA) from Mycobacterium bovis (strain ATCC BAA-935 / AF2122/97).